The primary structure comprises 297 residues: Acetaldehyde dehydrogenase (297 aa).

NAD(+) is bound at residue 15–18 (SGSI). The Acyl-thioester intermediate role is filled by Cys-130. NAD(+) is bound by residues 162–170 (SAGIATREN) and Asn-272.

This sequence belongs to the acetaldehyde dehydrogenase family.

It carries out the reaction acetaldehyde + NAD(+) + CoA = acetyl-CoA + NADH + H(+). The sequence is that of Acetaldehyde dehydrogenase (mhpF) from Burkholderia pseudomallei (strain K96243).